A 172-amino-acid chain; its full sequence is Small ribosomal subunit protein uS5 (172 aa).

The 64-residue stretch at 15–78 (LNDKLIFINR…ANAKRNLSRI (64 aa)) folds into the S5 DRBM domain.

This sequence belongs to the universal ribosomal protein uS5 family. Part of the 30S ribosomal subunit. Contacts proteins S4 and S8.

In terms of biological role, with S4 and S12 plays an important role in translational accuracy. Functionally, located at the back of the 30S subunit body where it stabilizes the conformation of the head with respect to the body. The sequence is that of Small ribosomal subunit protein uS5 from Dehalococcoides mccartyi (strain CBDB1).